Reading from the N-terminus, the 944-residue chain is MGFWENNKDSITSGLKSAGKYGYQGTKYVAKTGYKASKKHYNNSKARRERKSGKKNSSDEEYESEDEMEYERKPTDIRSLKDPKSFPPPPLKPGQKTYAGQQQQQMPNGQASYAFQGAYQGQPGAGSMEQSQYAQPQYNQYPQQQLQQGVVPQQPPIYGEQVPPYGSNSNATSYQSLPQQNQPQYAIPSQVSLNSASQQSTGFVSQNLQYGTQSSNPAPSPSFQNGLQCHQQPQYVSHGSTNLGQSQFPSGQQQQPTTQFGQQVLPSPAQPHPQPQQQQQGQPLPPPRGQVILPAPGEPLSNGFEQQQQQQQQQQQQQPLNQNNALLPQMNVEGVSGMAAVQPVYGQAMSSTTNMQDSNPSYGASPMQGQPPVGGQPPVPVRMQPQPPQPMQQGNIYPIEPSLDSTSSTPHFEVTPFDPDAPAPKPKIDIPTVDVSSLPPPPTHRDRGAVLHQEPAPSGKIQPNTTSSAASLPAKHSRTTTADNERNSGNKENDESTSKSSILGHYDVDVNIMPPPKPFRHGLDSVPSEHTRKNALERAVPILPPRNNVEPPPPPSRGNFERTELVLSTNAANVQEDPISNFLPPPKPFRHTETKQNQNSKASPVEIKDEVLPGHPSEEDRNVEPSLLPQSKPQSKSQSQFRRAHMETQPIQNFQPPPKPFRRSQSSNSSDSSYTIDGPEANHGRGRGRIAKHHDGDEYNPKSENSTENGRLGDAPNSFIRKRAPTPPAPSRSEKLHEGAITSEFDSSKDANKYEKSIPPVTSSIQAQQSTKKAPPPVVKPKPRNFSLKANEYPKELTREATGQDEVLNSITNELSHIKLRKTNVNLEKLGGAKKVKDSSPVPSDLDEKYVSASGSITPPRPPPSRSSPKKVPPVVPKKNDNLKKKPPVVPKKKPLLKSLEPRPIEMERAYSGDISAADDNLNPFERYKRNVVPQEDDRLHKLK.

4 disordered regions span residues 1–331 (MGFW…PQMN), 349–805 (MSST…TGQD), 821–901 (RKTN…KSLE), and 916–944 (SAAD…HKLK). Basic residues predominate over residues 36 to 54 (ASKKHYNNSKARRERKSGK). Ser-57, Ser-58, and Ser-64 each carry phosphoserine. Acidic residues predominate over residues 59–69 (DEEYESEDEME). A compositionally biased stretch (basic and acidic residues) spans 70–84 (YERKPTDIRSLKDPK). Composition is skewed to low complexity over residues 93-105 (PGQK…QQQQ) and 130-158 (QSQY…PPIY). Residues 166–244 (GSNSNATSYQ…YVSHGSTNLG (79 aa)) show a composition bias toward polar residues. Composition is skewed to low complexity over residues 245–267 (QSQF…VLPS) and 306–318 (QQQQ…QQQQ). A compositionally biased stretch (polar residues) spans 349-362 (MSSTTNMQDSNPSY). A compositionally biased stretch (pro residues) spans 374–390 (GGQPPVPVRMQPQPPQP). Residues 461-470 (IQPNTTSSAA) show a composition bias toward polar residues. Ser-471 carries the phosphoserine modification. Basic and acidic residues-rich tracts occupy residues 483–497 (DNER…DEST), 521–536 (HGLD…KNAL), and 606–623 (EIKD…DRNV). Low complexity-rich tracts occupy residues 625–640 (PSLL…SQSQ) and 664–673 (SQSSNSSDSS). Thr-726 carries the phosphothreonine modification. Residues 746 to 756 (DSSKDANKYEK) are compositionally biased toward basic and acidic residues. The segment covering 760–771 (PVTSSIQAQQST) has biased composition (polar residues). At Thr-858 the chain carries Phosphothreonine. A compositionally biased stretch (pro residues) spans 859–876 (PPRPPPSRSSPKKVPPVV). Over residues 885–896 (KKPPVVPKKKPL) the composition is skewed to basic residues.

The protein belongs to the AIM3 family. As to quaternary structure, interacts with RVS167.

The protein resides in the membrane raft. The sequence is that of Altered inheritance of mitochondria protein 3 (AIM3) from Saccharomyces cerevisiae (strain YJM789) (Baker's yeast).